The following is a 291-amino-acid chain: Bifunctional protein FolD (291 aa).

Residues 173 to 175 and serine 198 contribute to the NADP(+) site; that span reads GRS.

Belongs to the tetrahydrofolate dehydrogenase/cyclohydrolase family. As to quaternary structure, homodimer.

The catalysed reaction is (6R)-5,10-methylene-5,6,7,8-tetrahydrofolate + NADP(+) = (6R)-5,10-methenyltetrahydrofolate + NADPH. It catalyses the reaction (6R)-5,10-methenyltetrahydrofolate + H2O = (6R)-10-formyltetrahydrofolate + H(+). It functions in the pathway one-carbon metabolism; tetrahydrofolate interconversion. Functionally, catalyzes the oxidation of 5,10-methylenetetrahydrofolate to 5,10-methenyltetrahydrofolate and then the hydrolysis of 5,10-methenyltetrahydrofolate to 10-formyltetrahydrofolate. The sequence is that of Bifunctional protein FolD from Psychrobacter sp. (strain PRwf-1).